The primary structure comprises 482 residues: Pentatricopeptide repeat-containing protein At1g74900, mitochondrial (482 aa).

PPR repeat units lie at residues 90–124 (DASSFDLAIDIAARLHLHPTVWSLIHRMRSLRIGP), 125–159 (SPKTFAIVAERYASAGKPDKAVKLFLNMHEHGCFQ), 160–190 (DLASFNTILDVLCKSKRVEKAYELFRALRGR), 194–228 (DTVTYNVILNGWCLIKRTPKALEVLKEMVERGINP), 229–263 (NLTTYNTMLKGFFRAGQIRHAWEFFLEMKKRDCEI), 264–298 (DVVTYTTVVHGFGVAGEIKRARNVFDEMIREGVLP), 299–333 (SVATYNAMIQVLCKKDNVENAVVMFEEMVRRGYEP), 334–368 (NVTTYNVLIRGLFHAGEFSRGEELMQRMENEGCEP), 369–403 (NFQTYNMMIRYYSECSEVEKALGLFEKMGSGDCLP), 404–441 (NLDTYNILISGMFVRKRSEDMVVAGKLLLEMVERGFIP), and 442–476 (RKFTFNRVLNGLLLTGNQAFAKEILRLQSKSGSRL).

It belongs to the PPR family. P subfamily.

It is found in the mitochondrion. Its function is as follows. Required for the trans-splicing of intron 1 of the mitochondrial nad1 transcript encoding the ND1 subunit of the mitochondrial membrane respiratory chain NADH dehydrogenase (Complex I). The protein is Pentatricopeptide repeat-containing protein At1g74900, mitochondrial (OTP43) of Arabidopsis thaliana (Mouse-ear cress).